A 262-amino-acid polypeptide reads, in one-letter code: Glucosamine-6-phosphate deaminase (262 aa).

D63 (proton acceptor; for enolization step) is an active-site residue. The active-site For ring-opening step is N129. H131 serves as the catalytic Proton acceptor; for ring-opening step. E136 serves as the catalytic For ring-opening step.

Belongs to the glucosamine/galactosamine-6-phosphate isomerase family. NagB subfamily.

It catalyses the reaction alpha-D-glucosamine 6-phosphate + H2O = beta-D-fructose 6-phosphate + NH4(+). Its pathway is amino-sugar metabolism; N-acetylneuraminate degradation; D-fructose 6-phosphate from N-acetylneuraminate: step 5/5. In terms of biological role, catalyzes the reversible isomerization-deamination of glucosamine 6-phosphate (GlcN6P) to form fructose 6-phosphate (Fru6P) and ammonium ion. The polypeptide is Glucosamine-6-phosphate deaminase (Bacillus cereus (strain B4264)).